Here is a 467-residue protein sequence, read N- to C-terminus: DNA methyltransferase 1-associated protein 1 (467 aa).

Composition is skewed to basic and acidic residues over residues 1–11 and 26–48; these read MATGADVRDIL and SKKD…LTFK. A disordered region spans residues 1–48; the sequence is MATGADVRDILELGGPEGDAASGTISKKDIINPDKKKSKKSSETLTFK. Residue K27 forms a Glycyl lysine isopeptide (Lys-Gly) (interchain with G-Cter in SUMO2) linkage. One can recognise an SANT domain in the interval 149–199; sequence DDAWTKAETDHLFDLSRRFDLRFVVIHDRYDHQQFKKRSVEDLKERYYHIC. Residue K214 forms a Glycyl lysine isopeptide (Lys-Gly) (interchain with G-Cter in SUMO2) linkage. Residues 225 to 275 are a coiled coil; sequence RRKEQLERLYNRTPEQVAEEEYLLQELRKIEARKKEREKRSQDLQKLITAA. Over residues 258 to 267 the composition is skewed to basic and acidic residues; that stretch reads KKEREKRSQD. Disordered stretches follow at residues 258–305 and 404–467; these read KKER…PAVP and LGGP…AKKP. The span at 406-422 shows a compositional bias: low complexity; it reads GPATPASGPGPASAEPA. At T445 the chain carries Phosphothreonine. S448 carries the post-translational modification Phosphoserine.

In terms of assembly, component of the NuA4 histone acetyltransferase complex which contains the catalytic subunit KAT5/TIP60 and the subunits EP400, TRRAP/PAF400, BRD8/SMAP, EPC1, DMAP1/DNMAP1, RUVBL1/TIP49, RUVBL2, ING3, actin, ACTL6A/BAF53A, MORF4L1/MRG15, MORF4L2/MRGX, MRGBP, YEATS4/GAS41, VPS72/YL1 and MEAF6. Component of a NuA4-related complex which contains EP400, TRRAP/PAF400, SRCAP, BRD8/SMAP, EPC1, DMAP1/DNMAP1, RUVBL1/TIP49, RUVBL2, actin, ACTL6A/BAF53A, VPS72 and YEATS4/GAS41. DMAP1 also forms a complex with DNMT1 and HDAC2. Throughout S phase it interacts directly with the N-terminus of DNMT1, which serves to recruit DMAP1 to replication foci. DMAP1 interacts with ING1, a component of the mSin3A transcription repressor complex, although this interaction is not required for recruitment of ING1 to heterochromatin. Interacts directly with the transcriptional corepressor TSG101. Interacts with the pro-apoptotic protein DAXX. Interacts with URI1.

Its subcellular location is the nucleus. The protein resides in the cytoplasm. Its function is as follows. Involved in transcription repression and activation. Its interaction with HDAC2 may provide a mechanism for histone deacetylation in heterochromatin following replication of DNA at late firing origins. Can also repress transcription independently of histone deacetylase activity. May specifically potentiate DAXX-mediated repression of glucocorticoid receptor-dependent transcription. Component of the NuA4 histone acetyltransferase (HAT) complex which is involved in transcriptional activation of select genes principally by acetylation of nucleosomal histones H4 and H2A. This modification may both alter nucleosome - DNA interactions and promote interaction of the modified histones with other proteins which positively regulate transcription. This complex may be required for the activation of transcriptional programs associated with oncogene and proto-oncogene mediated growth induction, tumor suppressor mediated growth arrest and replicative senescence, apoptosis, and DNA repair. NuA4 may also play a direct role in DNA repair when recruited to sites of DNA damage. Participates in the nuclear localization of URI1 and increases its transcriptional corepressor activity. The polypeptide is DNA methyltransferase 1-associated protein 1 (DMAP1) (Homo sapiens (Human)).